Here is a 376-residue protein sequence, read N- to C-terminus: Peroxisomal membrane protein PEX27 (376 aa).

Homooligomer. Interacts with PEX25 and PEX34.

The protein resides in the peroxisome membrane. Required for regulation of peroxisome size and number. Also promotes peroxisome division and biogenesis. The sequence is that of Peroxisomal membrane protein PEX27 (PEX27) from Saccharomyces cerevisiae (strain ATCC 204508 / S288c) (Baker's yeast).